The sequence spans 247 residues: 2,3-bisphosphoglycerate-dependent phosphoglycerate mutase (247 aa).

Substrate contacts are provided by residues 8–15, 21–22, Arg-60, 87–90, Lys-98, 114–115, and 183–184; these read RHGESTWN, TG, ERHY, RR, and GN. His-9 acts as the Tele-phosphohistidine intermediate in catalysis. Glu-87 acts as the Proton donor/acceptor in catalysis.

This sequence belongs to the phosphoglycerate mutase family. BPG-dependent PGAM subfamily. As to quaternary structure, homodimer.

It catalyses the reaction (2R)-2-phosphoglycerate = (2R)-3-phosphoglycerate. The protein operates within carbohydrate degradation; glycolysis; pyruvate from D-glyceraldehyde 3-phosphate: step 3/5. In terms of biological role, catalyzes the interconversion of 2-phosphoglycerate and 3-phosphoglycerate. This is 2,3-bisphosphoglycerate-dependent phosphoglycerate mutase from Delftia acidovorans (strain DSM 14801 / SPH-1).